Consider the following 912-residue polypeptide: Protein translocase subunit SecA (912 aa).

Residues Gln87, 105 to 109 (GEGKT), and Asp508 each bind ATP. Residues 855 to 912 (QHQDAGGYGADEEVEQMQGGNAPVPVSQVTRDEPKVGRNDPCPCGSGKKYKHCHGQLS) form a disordered region. Zn(2+)-binding residues include Cys896, Cys898, Cys907, and His908. Residues 902–912 (KKYKHCHGQLS) are compositionally biased toward basic residues.

The protein belongs to the SecA family. Monomer and homodimer. Part of the essential Sec protein translocation apparatus which comprises SecA, SecYEG and auxiliary proteins SecDF-YajC and YidC. Zn(2+) serves as cofactor.

The protein localises to the cell inner membrane. The protein resides in the cytoplasm. The catalysed reaction is ATP + H2O + cellular proteinSide 1 = ADP + phosphate + cellular proteinSide 2.. Its function is as follows. Part of the Sec protein translocase complex. Interacts with the SecYEG preprotein conducting channel. Has a central role in coupling the hydrolysis of ATP to the transfer of proteins into and across the cell membrane, serving both as a receptor for the preprotein-SecB complex and as an ATP-driven molecular motor driving the stepwise translocation of polypeptide chains across the membrane. This Xanthomonas campestris pv. campestris (strain B100) protein is Protein translocase subunit SecA.